A 67-amino-acid chain; its full sequence is DNA-directed RNA polymerase subunit omega (67 aa).

It belongs to the RNA polymerase subunit omega family. As to quaternary structure, the RNAP catalytic core consists of 2 alpha, 1 beta, 1 beta' and 1 omega subunit. When a sigma factor is associated with the core the holoenzyme is formed, which can initiate transcription.

It catalyses the reaction RNA(n) + a ribonucleoside 5'-triphosphate = RNA(n+1) + diphosphate. In terms of biological role, promotes RNA polymerase assembly. Latches the N- and C-terminal regions of the beta' subunit thereby facilitating its interaction with the beta and alpha subunits. The sequence is that of DNA-directed RNA polymerase subunit omega from Variovorax paradoxus (strain S110).